A 431-amino-acid chain; its full sequence is MIDIQLLRKDIDSVAARLAGRKFKLDVAAFNALEAERKQIQSSTEDLQNKRNTLSKQIGALKGKGEDTSAVMAEVAGIGDELKASAARLDIVQAKISEFMLSIPNLPHESVPVGTDEAGNVELRKVGTPRSFDFEIRDHVDVGAALGLDFDVAAKITGSRFSVMKGGIARLHRALAQFMLDTHTAEHGYTECYTPYIVNADSLQGTGQLPKFEADLFAVKKGGQEGEGEALYLIPTAEVPLTNIVRDEIVAGDALPIRMTAHSPCFRSEAGSYGRDTRGMIRQHQFDKVEMVQVVHPEKSYEALDEMCGHAENILKKLGLPYRVITLCTGDMGFGATKTYDLEVWLPAQNTYREISSVSNCEAFQARRMQARFRNAQGKPESVHTLNGSGLAVGRTLVAVLENYQQADGSVTIPEVLHPYMGGLQRLTPQA.

Position 236 to 238 (236 to 238) interacts with L-serine; sequence TAE. Residue 267-269 coordinates ATP; sequence RSE. Residue Glu-290 participates in L-serine binding. Position 354-357 (354-357) interacts with ATP; that stretch reads EISS. Ser-389 lines the L-serine pocket.

Belongs to the class-II aminoacyl-tRNA synthetase family. Type-1 seryl-tRNA synthetase subfamily. Homodimer. The tRNA molecule binds across the dimer.

The protein localises to the cytoplasm. It catalyses the reaction tRNA(Ser) + L-serine + ATP = L-seryl-tRNA(Ser) + AMP + diphosphate + H(+). The enzyme catalyses tRNA(Sec) + L-serine + ATP = L-seryl-tRNA(Sec) + AMP + diphosphate + H(+). The protein operates within aminoacyl-tRNA biosynthesis; selenocysteinyl-tRNA(Sec) biosynthesis; L-seryl-tRNA(Sec) from L-serine and tRNA(Sec): step 1/1. Functionally, catalyzes the attachment of serine to tRNA(Ser). Is also able to aminoacylate tRNA(Sec) with serine, to form the misacylated tRNA L-seryl-tRNA(Sec), which will be further converted into selenocysteinyl-tRNA(Sec). This chain is Serine--tRNA ligase, found in Janthinobacterium sp. (strain Marseille) (Minibacterium massiliensis).